The chain runs to 123 residues: Histone H2B.3 (123 aa).

Residues 1–30 (MPPKVSGKAAKKAGKAQKNISKGDKKKNRK) are disordered. O-linked (GlcNAc) serine glycosylation is present at S110. K118 participates in a covalent cross-link: Glycyl lysine isopeptide (Lys-Gly) (interchain with G-Cter in ubiquitin).

This sequence belongs to the histone H2B family. The nucleosome is a histone octamer containing two molecules each of H2A, H2B, H3 and H4 assembled in one H3-H4 heterotetramer and two H2A-H2B heterodimers. The octamer wraps approximately 147 bp of DNA. Post-translationally, monoubiquitination of Lys-118 gives a specific tag for epigenetic transcriptional activation and is also prerequisite for histone H3 'Lys-4' and 'Lys-79' methylation. In terms of processing, glcNAcylation at Ser-110 promotes monoubiquitination of Lys-118. It fluctuates in response to extracellular glucose, and associates with transcribed genes.

Its subcellular location is the nucleus. The protein resides in the chromosome. In terms of biological role, core component of nucleosome. Nucleosomes wrap and compact DNA into chromatin, limiting DNA accessibility to the cellular machineries which require DNA as a template. Histones thereby play a central role in transcription regulation, DNA repair, DNA replication and chromosomal stability. DNA accessibility is regulated via a complex set of post-translational modifications of histones, also called histone code, and nucleosome remodeling. The protein is Histone H2B.3 of Tigriopus californicus (Marine copepod).